The following is a 247-amino-acid chain: ATP synthase subunit a, chloroplastic (247 aa).

Helical transmembrane passes span 38–58 (QVLITSWVVIALLLVSAILII), 95–115 (VPFIGTLFLFIFVSNWSGALL), 134–154 (INTTVALALLTSIAYFYAGLS), 199–219 (LVVVVLVSLVPLVVPIPVMFL), and 220–240 (GLFTSGIQALIFATLAAAYIG).

This sequence belongs to the ATPase A chain family. In terms of assembly, F-type ATPases have 2 components, CF(1) - the catalytic core - and CF(0) - the membrane proton channel. CF(1) has five subunits: alpha(3), beta(3), gamma(1), delta(1), epsilon(1). CF(0) has four main subunits: a, b, b' and c.

It is found in the plastid. The protein localises to the chloroplast thylakoid membrane. In terms of biological role, key component of the proton channel; it plays a direct role in the translocation of protons across the membrane. The protein is ATP synthase subunit a, chloroplastic of Glycine max (Soybean).